The sequence spans 570 residues: Berberine bridge enzyme-like 19 (570 aa).

The signal sequence occupies residues 1 to 30 (MLTTPPRTFVSVPFFFFFLLFLSLPLSSFS). A disulfide bridge connects residues C42 and C105. N80 carries N-linked (GlcNAc...) asparagine glycosylation. The FAD-binding PCMH-type domain occupies 83–257 (STLKPTIIIT…LGYKVKLVPV (175 aa)). Residues 120-182 (HDYDGLSYIS…RVHGFPAGVC (63 aa)) constitute a cross-link (6-(S-cysteinyl)-8alpha-(pros-histidyl)-FAD (His-Cys)). N-linked (GlcNAc...) asparagine glycans are attached at residues N341 and N359.

It belongs to the oxygen-dependent FAD-linked oxidoreductase family. FAD is required as a cofactor. In terms of processing, the FAD cofactor is bound via a bicovalent 6-S-cysteinyl, 8alpha-N1-histidyl FAD linkage.

The protein localises to the secreted. It localises to the cell wall. This is Berberine bridge enzyme-like 19 from Arabidopsis thaliana (Mouse-ear cress).